A 217-amino-acid chain; its full sequence is Adenylate kinase (217 aa).

ATP is bound at residue 10 to 15 (GAGKGT). Residues 30–59 (STGDMLRAAVKAGSPLGVKVKDIMASGQLV) form an NMP region. AMP contacts are provided by residues Thr-31, Arg-36, 57 to 59 (QLV), 85 to 88 (GFPR), and Gln-92. Residues 122–159 (GRRVHEASGRIYHVTHNPPKTEGVDDITGEPLVQRDDD) are LID. Residues Arg-123 and 132–133 (IY) contribute to the ATP site. Positions 156 and 167 each coordinate AMP. Gly-202 serves as a coordination point for ATP.

Belongs to the adenylate kinase family. As to quaternary structure, monomer.

Its subcellular location is the cytoplasm. The enzyme catalyses AMP + ATP = 2 ADP. Its pathway is purine metabolism; AMP biosynthesis via salvage pathway; AMP from ADP: step 1/1. Functionally, catalyzes the reversible transfer of the terminal phosphate group between ATP and AMP. Plays an important role in cellular energy homeostasis and in adenine nucleotide metabolism. The protein is Adenylate kinase of Teredinibacter turnerae (strain ATCC 39867 / T7901).